A 306-amino-acid polypeptide reads, in one-letter code: Acetyl-coenzyme A carboxylase carboxyl transferase subunit beta (306 aa).

Residues 27 to 296 (LWHKCPSCEA…PRFVAPVIEP (270 aa)) enclose the CoA carboxyltransferase N-terminal domain. Zn(2+)-binding residues include Cys-31, Cys-34, Cys-50, and Cys-53. The C4-type zinc finger occupies 31 to 53 (CPSCEAVLYRPELEKTLDVCPKC).

It belongs to the AccD/PCCB family. Acetyl-CoA carboxylase is a heterohexamer composed of biotin carboxyl carrier protein (AccB), biotin carboxylase (AccC) and two subunits each of ACCase subunit alpha (AccA) and ACCase subunit beta (AccD). Zn(2+) serves as cofactor.

It is found in the cytoplasm. The catalysed reaction is N(6)-carboxybiotinyl-L-lysyl-[protein] + acetyl-CoA = N(6)-biotinyl-L-lysyl-[protein] + malonyl-CoA. It functions in the pathway lipid metabolism; malonyl-CoA biosynthesis; malonyl-CoA from acetyl-CoA: step 1/1. Functionally, component of the acetyl coenzyme A carboxylase (ACC) complex. Biotin carboxylase (BC) catalyzes the carboxylation of biotin on its carrier protein (BCCP) and then the CO(2) group is transferred by the transcarboxylase to acetyl-CoA to form malonyl-CoA. The sequence is that of Acetyl-coenzyme A carboxylase carboxyl transferase subunit beta from Pseudomonas syringae pv. syringae (strain B728a).